Reading from the N-terminus, the 561-residue chain is Phosphatidylinositol 4-kinase gamma 1 (561 aa).

The 296-residue stretch at 121–416 (GAQPLLLPSG…SVFGKTSEDS (296 aa)) folds into the PI3K/PI4K catalytic domain. Residues 127 to 133 (LPSGMGG) are G-loop. ATP contacts are provided by residues 128 to 134 (PSGMGGA), lysine 149, and 233 to 236 (QRFV). Residues 266–274 (LNLDRHAGN) form a catalytic loop region. Residues 296-322 (PIDHGLCLPECLDDPYFEWLNWPQALV) are activation loop. Position 298 (aspartate 298) interacts with ATP. Residues 456–520 (PPLVPRGPRA…PISPNHDESK (65 aa)) form a disordered region. Residues 467-484 (TIPNDVTASMSSSQNQRI) are compositionally biased toward polar residues.

It belongs to the PI3/PI4-kinase family. Type II PI4K subfamily.

The enzyme catalyses a 1,2-diacyl-sn-glycero-3-phospho-(1D-myo-inositol) + ATP = a 1,2-diacyl-sn-glycero-3-phospho-(1D-myo-inositol 4-phosphate) + ADP + H(+). The phosphorylation of phosphatidylinositol (PI) to PI4P is the first committed step in the generation of phosphatidylinositol 4,5-bisphosphate (PIP2), a precursor of the second messenger inositol 1,4,5-trisphosphate (InsP3). The sequence is that of Phosphatidylinositol 4-kinase gamma 1 (PI4KG1) from Arabidopsis thaliana (Mouse-ear cress).